The sequence spans 195 residues: Capsid protein (195 aa).

The disordered stretch occupies residues 148–195; the sequence is NAPILSTLPETTVVRRRGRSPRRRTPSPRRRRSPSPRRRRSQSRESQC. The span at 161–188 shows a compositional bias: basic residues; that stretch reads VRRRGRSPRRRTPSPRRRRSPSPRRRRS. Phosphoserine; by host occurs at positions 167, 174, and 182. Residues 167–172 form a 1; half-length repeat; it reads SPRRRT. Residues 167–188 are 3 X 7 AA repeats of S-P-R-R-R-[PR]-S; that stretch reads SPRRRTPSPRRRRSPSPRRRRS. Positions 170–187 match the Bipartite nuclear localization signal motif; it reads RRTPSPRRRRSPSPRRRR. 2 consecutive repeat copies span residues 174–180 and 182–188. Residues 189-195 are RNA binding; that stretch reads QSRESQC.

The protein belongs to the orthohepadnavirus core antigen family. As to quaternary structure, homodimerizes, then multimerizes. Interacts with cytosol exposed regions of viral L glycoprotein present in the reticulum-to-Golgi compartment. Interacts with human FLNB. Phosphorylated form interacts with host importin alpha; this interaction depends on the exposure of the NLS, which itself depends upon genome maturation and/or phosphorylation of the capsid protein. Interacts with host NUP153. Phosphorylated by host SRPK1, SRPK2, and maybe protein kinase C or GAPDH. Phosphorylation is critical for pregenomic RNA packaging. Protein kinase C phosphorylation is stimulated by HBx protein and may play a role in transport of the viral genome to the nucleus at the late step during the viral replication cycle.

It localises to the virion. It is found in the host cytoplasm. Its function is as follows. Self assembles to form an icosahedral capsid. Most capsids appear to be large particles with an icosahedral symmetry of T=4 and consist of 240 copies of capsid protein, though a fraction forms smaller T=3 particles consisting of 180 capsid proteins. Entering capsids are transported along microtubules to the nucleus. Phosphorylation of the capsid is thought to induce exposure of nuclear localization signal in the C-terminal portion of the capsid protein that allows binding to the nuclear pore complex via the importin (karyopherin-) alpha and beta. Capsids are imported in intact form through the nuclear pore into the nuclear basket, where it probably binds NUP153. Only capsids that contain the mature viral genome can release the viral DNA and capsid protein into the nucleoplasm. Immature capsids get stuck in the basket. Capsids encapsulate the pre-genomic RNA and the P protein. Pre-genomic RNA is reverse-transcribed into DNA while the capsid is still in the cytoplasm. The capsid can then either be directed to the nucleus, providing more genomes for transcription, or bud through the endoplasmic reticulum to provide new virions. In Homo sapiens (Human), this protein is Capsid protein.